A 68-amino-acid chain; its full sequence is Lividin-1 (68 aa).

An N-terminal signal peptide occupies residues 1-22; the sequence is MFTLKKSLLLLFFLGTINLSLC. Positions 23–42 are excised as a propeptide; sequence QEERNADEEERRDERNVEVE. Cysteines 62 and 68 form a disulfide.

Expressed by the skin glands.

Its subcellular location is the secreted. In terms of biological role, antimicrobial peptide. The chain is Lividin-1 from Odorrana livida (Green mountain frog).